A 98-amino-acid chain; its full sequence is Co-chaperonin GroES (98 aa).

It belongs to the GroES chaperonin family. As to quaternary structure, heptamer of 7 subunits arranged in a ring. Interacts with the chaperonin GroEL.

The protein resides in the cytoplasm. Its function is as follows. Together with the chaperonin GroEL, plays an essential role in assisting protein folding. The GroEL-GroES system forms a nano-cage that allows encapsulation of the non-native substrate proteins and provides a physical environment optimized to promote and accelerate protein folding. GroES binds to the apical surface of the GroEL ring, thereby capping the opening of the GroEL channel. In Neorickettsia sennetsu (strain ATCC VR-367 / Miyayama) (Ehrlichia sennetsu), this protein is Co-chaperonin GroES.